Consider the following 429-residue polypeptide: MLDPKLLRDDPAKLIERLNTRGGDFTEVIEQLVALDSQRRASQTAFNRAQAEGNQIGKQVGERLRRGTAVGDPEVLALKQRGIDLKATLALLQDQERELAERFAALLPTLPNVPRPEVPIGKDENDNREMRFWGTPPIFDFEPAAHWDLGERLGLMNFARATLVAQARFVTLMGDGALLERALIAFMLDRHRAHGYIEILPPYLVNTASMTGTGQLPKFAEDSFRCRDDDLWLIPTAEVPVTNLYRDEILTDMQLPIHHCAFTPCFRREAGSYGRDTRGLIRLHQFHKVELVKFCRPEHSPTEHEKLVADAEDVLQQLELPYRVIELCTGDLGFGAARCFDLEVWLPSQNRYREISSCSNFEDFQARRANLRFKAPDKKGTEFVHTLNGSGLAVGRTFAAILENYQNRDGTVRVPEALKPYVRRDVLSR.

236 to 238 (TAE) is an L-serine binding site. 267 to 269 (RRE) provides a ligand contact to ATP. Glu-290 contributes to the L-serine binding site. 354–357 (EISS) contacts ATP. Residue Ser-390 participates in L-serine binding.

The protein belongs to the class-II aminoacyl-tRNA synthetase family. Type-1 seryl-tRNA synthetase subfamily. In terms of assembly, homodimer. The tRNA molecule binds across the dimer.

The protein resides in the cytoplasm. It catalyses the reaction tRNA(Ser) + L-serine + ATP = L-seryl-tRNA(Ser) + AMP + diphosphate + H(+). It carries out the reaction tRNA(Sec) + L-serine + ATP = L-seryl-tRNA(Sec) + AMP + diphosphate + H(+). The protein operates within aminoacyl-tRNA biosynthesis; selenocysteinyl-tRNA(Sec) biosynthesis; L-seryl-tRNA(Sec) from L-serine and tRNA(Sec): step 1/1. Functionally, catalyzes the attachment of serine to tRNA(Ser). Is also able to aminoacylate tRNA(Sec) with serine, to form the misacylated tRNA L-seryl-tRNA(Sec), which will be further converted into selenocysteinyl-tRNA(Sec). This Gloeobacter violaceus (strain ATCC 29082 / PCC 7421) protein is Serine--tRNA ligase.